A 142-amino-acid polypeptide reads, in one-letter code: Hemoglobin subunit alpha (142 aa).

The region spanning 2–142 (VLSPADKSNV…VSTVLTSKYR (141 aa)) is the Globin domain. Phosphoserine is present on Ser4. Lys8 and Lys12 each carry N6-succinyllysine. Lys17 is modified (N6-acetyllysine; alternate). At Lys17 the chain carries N6-succinyllysine; alternate. Tyr25 is subject to Phosphotyrosine. Ser36 is modified (phosphoserine). Lys41 carries the post-translational modification N6-succinyllysine. Ser50 is modified (phosphoserine). His59 provides a ligand contact to O2. His88 serves as a coordination point for heme b. Ser103 carries the post-translational modification Phosphoserine. Phosphothreonine is present on Thr109. At Ser125 the chain carries Phosphoserine. Thr135 and Thr138 each carry phosphothreonine. Ser139 carries the post-translational modification Phosphoserine.

The protein belongs to the globin family. Heterotetramer of two alpha chains and two beta chains. In terms of tissue distribution, red blood cells.

Involved in oxygen transport from the lung to the various peripheral tissues. Functionally, hemopressin acts as an antagonist peptide of the cannabinoid receptor CNR1. Hemopressin-binding efficiently blocks cannabinoid receptor CNR1 and subsequent signaling. This chain is Hemoglobin subunit alpha (HBA), found in Ursus maritimus (Polar bear).